The primary structure comprises 87 residues: Small ribosomal subunit protein bS20 (87 aa).

Basic residues predominate over residues 1–11 (MANHKSALKRI). The tract at residues 1–23 (MANHKSALKRIKQTEKRTERNRH) is disordered.

It belongs to the bacterial ribosomal protein bS20 family.

In terms of biological role, binds directly to 16S ribosomal RNA. This chain is Small ribosomal subunit protein bS20, found in Geotalea uraniireducens (strain Rf4) (Geobacter uraniireducens).